Consider the following 1943-residue polypeptide: Trichohyalin (1943 aa).

Residues 1 to 91 (MSPLLRSICD…AQACYYALGQ (91 aa)) form an S-100-like region. EF-hand domains follow at residues 23-48 (CDGAALTKKDLKNLLEREFGAVLRRP) and 49-84 (HDPKTVDLILELLDLDSNGRVDFNEFLLFIFKVAQA). Residues aspartate 32, aspartate 62, aspartate 64, asparagine 66, arginine 68, and glutamate 73 each coordinate Ca(2+). 3 disordered regions span residues 110–164 (LQDR…LEQR), 186–209 (RRAEEEQLQSCKGHETEEFPDEEQ), and 222–274 (GREE…LQEE). The segment covering 197–209 (KGHETEEFPDEEQ) has biased composition (basic and acidic residues). Residues 314-326 (RREQQEERREQQE) form a 1-1; approximate repeat. The interval 314–377 (RREQQEERRE…QEEERREQQL (64 aa)) is 5 X 13 AA tandem repeats of R-R-E-Q-E-E-E-R-R-E-Q-Q-L. A 1-2; approximate repeat occupies 327–339 (RREQQEERREQQL). Residues 340 to 351 (RREQEERREQQL) form a 1-3; approximate repeat. 10 tandem repeats follow at residues 352 to 364 (RREQEEERREQQL), 365 to 377 (RREQEEERREQQL), 378 to 383 (RREQQL), 384 to 389 (RREQQL), 390 to 395 (RREQQL), 396 to 401 (RREQQL), 402 to 407 (RREQQL), 408 to 413 (RREQQL), 414 to 419 (RREQQL), and 420 to 425 (RREQQL). The 8 X 6 AA tandem repeats of R-R-E-Q-Q-L stretch occupies residues 378-425 (RREQQLRREQQLRREQQLRREQQLRREQQLRREQQLRREQQLRREQQL). The segment at 425–683 (LRREQEEERH…REHEEERREQ (259 aa)) is 9 X 28 AA approximate tandem repeats. 4 disordered regions span residues 426 to 485 (RREQ…EERR), 509 to 546 (REQEERREQRLKRQEEEERLQQRLRSEQQLRREQEERR), 608 to 819 (ERLE…EKEQ), and 837 to 872 (EEQLQRRERAQQLQEEEDGLQEDQERRRSQEQRRDQ). Composition is skewed to basic and acidic residues over residues 608–684 (ERLE…REQE), 724–781 (RKQE…ERGR), 789–812 (PLREQRERQLRAEERQQREQRFLP), and 859–872 (DQERRRSQEQRRDQ). A run of 10 repeats spans residues 906–935 (LQEEEEELQREEREKRRRQEQERQYREEEQ), 936–965 (LQQEEEQLLREEREKRRRQERERQYRKDKK), 966–995 (LQQKEEQLLGEEPEKRRRQEREKKYREEEE), 996–1025 (LQQEEEQLLREEREKRRRQEWERQYRKKDE), 1026–1055 (LQQEEEQLLREEREKRRLQERERQYREEEE), 1056–1085 (LQQEEEQLLGEERETRRRQELERQYRKEEE), 1086–1115 (LQQEEEQLLREEPEKRRRQERERQCREEEE), 1116–1145 (LQQEEEQLLREEREKRRRQELERQYREEEE), 1146–1175 (VQQEEEQLLREEPEKRRRQELERQYREEEE), and 1176–1204 (LQQEEEQLLREEQEKRRQERERQYREEEE). A 10 X 30 AA tandem repeats region spans residues 906 to 1204 (LQEEEEELQR…RERQYREEEE (299 aa)). The segment covering 950–992 (KRRRQERERQYRKDKKLQQKEEQLLGEEPEKRRRQEREKKYRE) has biased composition (basic and acidic residues). Disordered regions lie at residues 950–1000 (KRRR…QQEE), 1046–1120 (RERQ…QQEE), 1137–1162 (ERQYREEEEVQQEEEQLLREEPEKRR), 1193–1371 (QERE…RHQE), 1404–1435 (REQQLRQDRDRKFREEEQQLSRQERDRKFREE), 1492–1691 (QQLR…ERDR), 1757–1820 (PERE…RDGK), 1834–1864 (EQRLRQERDRQYRAEEQFATQEKSRREEQEL), and 1876–1928 (RERK…VRSS). Residues 1052–1064 (EEEELQQEEEQLL) are compositionally biased toward acidic residues. Basic and acidic residues-rich tracts occupy residues 1065 to 1085 (GEERETRRRQELERQYRKEEE) and 1092 to 1111 (QLLREEPEKRRRQERERQCR). Residues 1142–1151 (EEEEVQQEEE) are compositionally biased toward acidic residues. Over residues 1152–1162 (QLLREEPEKRR) the composition is skewed to basic and acidic residues. Composition is skewed to basic and acidic residues over residues 1214–1263 (YRDE…DRQS) and 1274–1371 (QQER…RHQE). Residues 1292–1894 (HFPEEEQLER…IRRQQKEEQR (603 aa)) are 23 X 26 AA approximate tandem repeats. Composition is skewed to basic and acidic residues over residues 1492–1524 (QQLRRQERDRKFREQELRSQEPERKFLEEEQQL), 1533–1673 (FLQE…REEE), and 1682–1691 (QQLRRQERDR). Over residues 1876 to 1912 (RERKLREEHIRRQQKEEQRHRQVGEIKSQEGKGHGRL) the composition is skewed to basic and acidic residues.

It belongs to the S100-fused protein family. In terms of assembly, monomer. In terms of processing, substrate of transglutaminase. Some 200 arginines are probably converted to citrullines by peptidylarginine deimidase. As to expression, found in the hard keratinizing tissues such as the inner root sheath (IRS) of hair follicles and medulla, and in the filiform papillae of dorsal tongue epithelium.

Functionally, intermediate filament-associated protein that associates in regular arrays with keratin intermediate filaments (KIF) of the inner root sheath cells of the hair follicle and the granular layer of the epidermis. It later becomes cross-linked to KIF by isodipeptide bonds. It may serve as scaffold protein, together with involucrin, in the organization of the cell envelope or even anchor the cell envelope to the KIF network. It may be involved in its own calcium-dependent postsynthetic processing during terminal differentiation. This is Trichohyalin (TCHH) from Homo sapiens (Human).